A 377-amino-acid chain; its full sequence is D-alanine--D-alanine ligase (377 aa).

Positions 140 to 349 (KELLTVNGIR…NAKLVDMLID (210 aa)) constitute an ATP-grasp domain. 170–225 (VAELGNIVFVKAANQGSSVGISRVTNAEEYTEALSDSFQYDYKVLIEEAVNGAREL) contributes to the ATP binding site. Mg(2+) is bound by residues aspartate 303, glutamate 316, and asparagine 318.

It belongs to the D-alanine--D-alanine ligase family. It depends on Mg(2+) as a cofactor. Mn(2+) serves as cofactor.

Its subcellular location is the cytoplasm. It catalyses the reaction 2 D-alanine + ATP = D-alanyl-D-alanine + ADP + phosphate + H(+). It participates in cell wall biogenesis; peptidoglycan biosynthesis. Cell wall formation. This is D-alanine--D-alanine ligase from Leuconostoc mesenteroides.